A 597-amino-acid polypeptide reads, in one-letter code: Uptake hydrogenase large subunit (597 aa).

C75, C78, C576, and C579 together coordinate Ni(2+).

It belongs to the [NiFe]/[NiFeSe] hydrogenase large subunit family. As to quaternary structure, heterodimer of a large and a small subunit. Requires Ni(2+) as cofactor.

It is found in the cell membrane. The enzyme catalyses H2 + A = AH2. In terms of biological role, this enzyme recycles the H(2) produced by nitrogenase to increase the production of ATP and to protect nitrogenase against inhibition or damage by O(2) under carbon- or phosphate-limited conditions. The protein is Uptake hydrogenase large subunit (hupB) of Rhodobacter capsulatus (Rhodopseudomonas capsulata).